The chain runs to 43 residues: Protein PsbN (43 aa).

The helical transmembrane segment at 7–24 threads the bilayer; it reads VAISISRSLVSFTGYALY.

Belongs to the PsbN family.

Its subcellular location is the plastid. It is found in the chloroplast thylakoid membrane. May play a role in photosystem I and II biogenesis. The sequence is that of Protein PsbN from Ginkgo biloba (Ginkgo).